The following is a 216-amino-acid chain: Peptide deformylase 1 (216 aa).

Fe cation is bound by residues Cys135 and His177. Residue Glu178 is part of the active site. His181 lines the Fe cation pocket.

The protein belongs to the polypeptide deformylase family. It depends on Fe(2+) as a cofactor.

The enzyme catalyses N-terminal N-formyl-L-methionyl-[peptide] + H2O = N-terminal L-methionyl-[peptide] + formate. Its function is as follows. Removes the formyl group from the N-terminal Met of newly synthesized proteins. Requires at least a dipeptide for an efficient rate of reaction. N-terminal L-methionine is a prerequisite for activity but the enzyme has broad specificity at other positions. The chain is Peptide deformylase 1 from Streptomyces avermitilis (strain ATCC 31267 / DSM 46492 / JCM 5070 / NBRC 14893 / NCIMB 12804 / NRRL 8165 / MA-4680).